We begin with the raw amino-acid sequence, 307 residues long: tRNA-cytidine(32) 2-sulfurtransferase (307 aa).

The short motif at Ser-44–Ser-49 is the PP-loop motif element. [4Fe-4S] cluster is bound by residues Cys-119, Cys-122, and Cys-210.

This sequence belongs to the TtcA family. Homodimer. Mg(2+) is required as a cofactor. It depends on [4Fe-4S] cluster as a cofactor.

It is found in the cytoplasm. The enzyme catalyses cytidine(32) in tRNA + S-sulfanyl-L-cysteinyl-[cysteine desulfurase] + AH2 + ATP = 2-thiocytidine(32) in tRNA + L-cysteinyl-[cysteine desulfurase] + A + AMP + diphosphate + H(+). It participates in tRNA modification. Catalyzes the ATP-dependent 2-thiolation of cytidine in position 32 of tRNA, to form 2-thiocytidine (s(2)C32). The sulfur atoms are provided by the cysteine/cysteine desulfurase (IscS) system. The chain is tRNA-cytidine(32) 2-sulfurtransferase from Aliivibrio fischeri (strain ATCC 700601 / ES114) (Vibrio fischeri).